A 376-amino-acid chain; its full sequence is Putative endoglucanase type K (376 aa).

Residues 1–18 (MRSYTLLALAGPLAVSAA) form the signal peptide. Residues 19–308 (SGSGHSTRYW…ATKPAQPVNK (290 aa)) form a catalytic region. Asp-29 functions as the Nucleophile in the catalytic mechanism. Residue Asp-140 is the Proton donor of the active site. A disordered region spans residues 229-332 (AFKGDTSASK…SCPAKTDATA (104 aa)). 2 stretches are compositionally biased toward low complexity: residues 235–258 (SASKPQPSSSAKKTTSAAAAAQPQ) and 291–306 (KPVATKPAATKPAQPV). Positions 309 to 338 (PKTTQKVRGTKTRGSCPAKTDATAKASVVP) are linker. The 40-residue stretch at 335–374 (SVVPAYYQCGGSKSAYPNGNLACATGSKCVKQNEYYSQCV) folds into the CBM1 domain.

Belongs to the glycosyl hydrolase 45 (cellulase K) family.

The catalysed reaction is Endohydrolysis of (1-&gt;4)-beta-D-glucosidic linkages in cellulose, lichenin and cereal beta-D-glucans.. The polypeptide is Putative endoglucanase type K (Fusarium oxysporum (Fusarium vascular wilt)).